The following is a 400-amino-acid chain: Phosphoglycerate kinase (400 aa).

Residues aspartate 21–asparagine 23, arginine 36, histidine 59–arginine 62, arginine 119, and arginine 160 contribute to the substrate site. ATP-binding positions include lysine 211, glutamate 329, and glycine 356–serine 359.

The protein belongs to the phosphoglycerate kinase family. Monomer.

It is found in the cytoplasm. The catalysed reaction is (2R)-3-phosphoglycerate + ATP = (2R)-3-phospho-glyceroyl phosphate + ADP. Its pathway is carbohydrate degradation; glycolysis; pyruvate from D-glyceraldehyde 3-phosphate: step 2/5. The protein is Phosphoglycerate kinase of Lactiplantibacillus plantarum (strain ATCC BAA-793 / NCIMB 8826 / WCFS1) (Lactobacillus plantarum).